The sequence spans 263 residues: MKERFIKKTHYLDYQFDEPTDIKLGFTTRENGLSPYPNHSFNMARYISDSAHHITHHQDILANLIGYPRDEWVFPIQTHDSRIVEVTSEHKGTNIDELTDDLHGIDGMYTFDSHILLTMCYADCVPVYFYSEPHGYIGLAHAGWRGTYGQIVKEMLKKVDFDYEDLKIVIGPATSNSYEINDDIKNKFEELTIDSTLYIETRGKNQHGIDLKKANALLLEEAGVPSKNIYVTEYATSENLDLFFSYRVEKGQTGRMLAFIGRK.

Positions 79, 124, and 141 each coordinate Zn(2+).

This sequence belongs to the purine nucleoside phosphorylase YfiH/LACC1 family. Homodimer. Cu(2+) is required as a cofactor. The cofactor is Zn(2+).

The catalysed reaction is adenosine + phosphate = alpha-D-ribose 1-phosphate + adenine. It catalyses the reaction S-methyl-5'-thioadenosine + phosphate = 5-(methylsulfanyl)-alpha-D-ribose 1-phosphate + adenine. The enzyme catalyses inosine + phosphate = alpha-D-ribose 1-phosphate + hypoxanthine. It carries out the reaction adenosine + H2O + H(+) = inosine + NH4(+). In terms of biological role, purine nucleoside enzyme that catalyzes the phosphorolysis of adenosine and inosine nucleosides, yielding D-ribose 1-phosphate and the respective free bases, adenine and hypoxanthine. Also catalyzes the phosphorolysis of S-methyl-5'-thioadenosine into adenine and S-methyl-5-thio-alpha-D-ribose 1-phosphate. Also has adenosine deaminase activity. The sequence is that of Purine nucleoside phosphorylase SE_0862 from Staphylococcus epidermidis (strain ATCC 12228 / FDA PCI 1200).